Here is a 246-residue protein sequence, read N- to C-terminus: O-antigen export system ATP-binding protein RfbB (246 aa).

The ABC transporter domain occupies 22-246 (SGIKDLVFHP…IIELYKQAMA (225 aa)). Residue 63–70 (GRNGAGKS) coordinates ATP.

It belongs to the ABC transporter superfamily.

Its subcellular location is the cell inner membrane. Its function is as follows. May form an ATP-driven O-antigen export apparatus, in association with RfbA. In Klebsiella pneumoniae, this protein is O-antigen export system ATP-binding protein RfbB (rfbB).